Here is a 545-residue protein sequence, read N- to C-terminus: Carboxypeptidase Y homolog A (545 aa).

Residues 1–17 (MKSLALALLVGGAIAAG) form the signal peptide. The propeptide occupies 18–123 (PQQQVLQAPV…KLEAYDLRVK (106 aa)). 5 disulfide bridges follow: Cys177/Cys416, Cys311/Cys325, Cys335/Cys358, Cys342/Cys351, and Cys380/Cys386. A glycan (N-linked (GlcNAc...) asparagine) is linked at Asn208. Ser264 is a catalytic residue. Asp455 is a catalytic residue. Residues Asn485, Asn491, and Asn506 are each glycosylated (N-linked (GlcNAc...) asparagine). His517 is a catalytic residue.

Belongs to the peptidase S10 family.

Its subcellular location is the vacuole. The enzyme catalyses Release of a C-terminal amino acid with broad specificity.. Functionally, vacuolar carboxypeptidase involved in degradation of small peptides. Digests preferentially peptides containing an aliphatic or hydrophobic residue in P1' position, as well as methionine, leucine or phenylalanine in P1 position of ester substrate. In Blastomyces gilchristii (strain SLH14081) (Blastomyces dermatitidis), this protein is Carboxypeptidase Y homolog A (CPYA).